The sequence spans 209 residues: Methylthioribulose-1-phosphate dehydratase (209 aa).

Residues H99 and H101 each coordinate Zn(2+).

The protein belongs to the aldolase class II family. MtnB subfamily. Zn(2+) is required as a cofactor.

The enzyme catalyses 5-(methylsulfanyl)-D-ribulose 1-phosphate = 5-methylsulfanyl-2,3-dioxopentyl phosphate + H2O. It functions in the pathway amino-acid biosynthesis; L-methionine biosynthesis via salvage pathway; L-methionine from S-methyl-5-thio-alpha-D-ribose 1-phosphate: step 2/6. Its function is as follows. Catalyzes the dehydration of methylthioribulose-1-phosphate (MTRu-1-P) into 2,3-diketo-5-methylthiopentyl-1-phosphate (DK-MTP-1-P). In Leptospira biflexa serovar Patoc (strain Patoc 1 / Ames), this protein is Methylthioribulose-1-phosphate dehydratase.